Reading from the N-terminus, the 419-residue chain is UDP-N-acetylglucosamine 1-carboxyvinyltransferase 2 (419 aa).

22–23 (KN) provides a ligand contact to phosphoenolpyruvate. Residue Arg92 participates in UDP-N-acetyl-alpha-D-glucosamine binding. Asp116 serves as the catalytic Proton donor. UDP-N-acetyl-alpha-D-glucosamine contacts are provided by residues 121-125 (RPIDQ), Asp306, and Leu328.

It belongs to the EPSP synthase family. MurA subfamily.

Its subcellular location is the cytoplasm. The enzyme catalyses phosphoenolpyruvate + UDP-N-acetyl-alpha-D-glucosamine = UDP-N-acetyl-3-O-(1-carboxyvinyl)-alpha-D-glucosamine + phosphate. Its pathway is cell wall biogenesis; peptidoglycan biosynthesis. Functionally, cell wall formation. Adds enolpyruvyl to UDP-N-acetylglucosamine. This Latilactobacillus sakei subsp. sakei (strain 23K) (Lactobacillus sakei subsp. sakei) protein is UDP-N-acetylglucosamine 1-carboxyvinyltransferase 2.